Here is a 199-residue protein sequence, read N- to C-terminus: NADH-ubiquinone oxidoreductase chain 6 (199 aa).

A run of 5 helical transmembrane segments spans residues 1–21 (MILF…VIRA), 27–47 (SVLF…LLGL), 49–69 (FFAM…FLFV), 87–107 (YLPV…LMVD), and 150–170 (FFLF…AIVL).

The protein belongs to the complex I subunit 6 family.

The protein localises to the mitochondrion membrane. The enzyme catalyses a ubiquinone + NADH + 5 H(+)(in) = a ubiquinol + NAD(+) + 4 H(+)(out). In terms of biological role, core subunit of the mitochondrial membrane respiratory chain NADH dehydrogenase (Complex I) that is believed to belong to the minimal assembly required for catalysis. Complex I functions in the transfer of electrons from NADH to the respiratory chain. The immediate electron acceptor for the enzyme is believed to be ubiquinone. The chain is NADH-ubiquinone oxidoreductase chain 6 (ND6) from Marchantia polymorpha (Common liverwort).